The chain runs to 559 residues: Glucose-6-phosphate isomerase (559 aa).

Glu-363 serves as the catalytic Proton donor. Catalysis depends on residues His-394 and Lys-523.

This sequence belongs to the GPI family.

The protein localises to the cytoplasm. The catalysed reaction is alpha-D-glucose 6-phosphate = beta-D-fructose 6-phosphate. Its pathway is carbohydrate biosynthesis; gluconeogenesis. It participates in carbohydrate degradation; glycolysis; D-glyceraldehyde 3-phosphate and glycerone phosphate from D-glucose: step 2/4. Its function is as follows. Catalyzes the reversible isomerization of glucose-6-phosphate to fructose-6-phosphate. In Bartonella henselae (strain ATCC 49882 / DSM 28221 / CCUG 30454 / Houston 1) (Rochalimaea henselae), this protein is Glucose-6-phosphate isomerase.